A 365-amino-acid chain; its full sequence is Bifunctional chorismate mutase/prephenate dehydratase (365 aa).

The Chorismate mutase domain occupies methionine 1 to arginine 96. Substrate is bound by residues arginine 11, arginine 28, lysine 39, and glutamate 57. The Prephenate dehydratase domain occupies valine 97–serine 272. Residues serine 284–proline 361 form the ACT domain.

It is found in the cytoplasm. The enzyme catalyses chorismate = prephenate. It catalyses the reaction prephenate + H(+) = 3-phenylpyruvate + CO2 + H2O. It participates in amino-acid biosynthesis; L-phenylalanine biosynthesis; phenylpyruvate from prephenate: step 1/1. The protein operates within metabolic intermediate biosynthesis; prephenate biosynthesis; prephenate from chorismate: step 1/1. In terms of biological role, catalyzes the Claisen rearrangement of chorismate to prephenate and the decarboxylation/dehydration of prephenate to phenylpyruvate. The chain is Bifunctional chorismate mutase/prephenate dehydratase from Stutzerimonas stutzeri (Pseudomonas stutzeri).